Here is a 322-residue protein sequence, read N- to C-terminus: Serine/threonine-protein phosphatase PP1 isozyme 6 (322 aa).

Met1 is subject to N-acetylmethionine. Asp61, His63, Asp89, and Asn121 together coordinate Mn(2+). His122 (proton donor) is an active-site residue. His170 and His245 together coordinate Mn(2+). The segment at 303 to 322 is disordered; it reads GFNNNVPRPGTPPHKGGKGR.

The protein belongs to the PPP phosphatase family. PP-1 subfamily. Mn(2+) is required as a cofactor. Strongly up-regulated within developing flowers, especially in the tapetum, the developing and mature pollen and in the ovaries.

The protein localises to the nucleus. It is found in the cytoplasm. The enzyme catalyses O-phospho-L-seryl-[protein] + H2O = L-seryl-[protein] + phosphate. The catalysed reaction is O-phospho-L-threonyl-[protein] + H2O = L-threonyl-[protein] + phosphate. With respect to regulation, phosphatase activity is strongly reduced by the protein phosphatase inhibitor 2 (I-2). In terms of biological role, serine/threonine-protein phosphatase that possesses phosphatase activity toward para-nitrophenyl phosphate (pNPP) in vitro. This Arabidopsis thaliana (Mouse-ear cress) protein is Serine/threonine-protein phosphatase PP1 isozyme 6.